The primary structure comprises 256 residues: Large ribosomal subunit protein bL28m (256 aa).

Residues Met-1 to Lys-55 constitute a mitochondrion transit peptide.

It belongs to the bacterial ribosomal protein bL28 family. As to quaternary structure, component of the mitochondrial ribosome large subunit (39S) which comprises a 16S rRNA and about 50 distinct proteins. Interacts with OXA1L.

The protein localises to the mitochondrion. The polypeptide is Large ribosomal subunit protein bL28m (MRPL28) (Bos taurus (Bovine)).